A 234-amino-acid polypeptide reads, in one-letter code: tRNA (guanine-N(1)-)-methyltransferase (234 aa).

S-adenosyl-L-methionine-binding positions include Gly-115 and 135–140 (VGDYIL).

The protein belongs to the RNA methyltransferase TrmD family. As to quaternary structure, homodimer.

The protein localises to the cytoplasm. It carries out the reaction guanosine(37) in tRNA + S-adenosyl-L-methionine = N(1)-methylguanosine(37) in tRNA + S-adenosyl-L-homocysteine + H(+). Its function is as follows. Specifically methylates guanosine-37 in various tRNAs. In Rickettsia rickettsii (strain Iowa), this protein is tRNA (guanine-N(1)-)-methyltransferase.